Here is a 272-residue protein sequence, read N- to C-terminus: D-aminoacyl-tRNA deacylase (272 aa).

Monomer. The cofactor is Zn(2+).

It carries out the reaction a D-aminoacyl-tRNA + H2O = a tRNA + a D-alpha-amino acid + H(+). It catalyses the reaction glycyl-tRNA(Ala) + H2O = tRNA(Ala) + glycine + H(+). The enzyme catalyses D-tyrosyl-tRNA(Tyr) + H2O = D-tyrosine + tRNA(Tyr). D-aminoacyl-tRNA deacylase with broad substrate specificity. By recycling D-aminoacyl-tRNA to D-amino acids and free tRNA molecules, this enzyme counteracts the toxicity associated with the formation of D-aminoacyl-tRNA entities in vivo. Catalyzes the hydrolysis of D-tyrosyl-tRNA(Tyr) and D-aspartyl-tRNA(Asp). This chain is D-aminoacyl-tRNA deacylase, found in Pyrococcus abyssi (strain GE5 / Orsay).